The chain runs to 204 residues: Transmembrane protein 253 (204 aa).

The next 4 helical transmembrane spans lie at 33-53 (LVLA…TISV), 62-82 (LVTA…IITL), 96-116 (MMIS…IEVM), and 138-158 (LSAE…LFLL). The tract at residues 184–204 (EEVSGLENGPVVASTGNRTDE) is disordered.

Its subcellular location is the membrane. This is Transmembrane protein 253 (Tmem253) from Mus musculus (Mouse).